We begin with the raw amino-acid sequence, 67 residues long: Beta-defensin 14 (67 aa).

A signal peptide spans 1 to 22; the sequence is MRLHYLLFVFLILFLVPAPGDA. Disulfide bonds link cysteine 33/cysteine 62, cysteine 40/cysteine 55, and cysteine 45/cysteine 63.

This sequence belongs to the beta-defensin family.

The protein resides in the secreted. Has antibacterial activity. The protein is Beta-defensin 14 (Defb14) of Mus musculus (Mouse).